Consider the following 233-residue polypeptide: Protein FAM204A (233 aa).

Residues 1–126 (MWSGLLPPGL…HSEPSSNETQ (126 aa)) form a disordered region. Positions 13-24 (SDAESNSEDEAT) are enriched in acidic residues. A compositionally biased stretch (basic and acidic residues) spans 39 to 58 (ESIRKTEIIDFSTDEPKTET). Residues 97–109 (FRGKRRKRSRKDK) show a composition bias toward basic residues. Residues 144–164 (VKRKKVEKSGLEKRIDQAVEE) adopt a coiled-coil conformation.

The polypeptide is Protein FAM204A (FAM204A) (Homo sapiens (Human)).